A 551-amino-acid polypeptide reads, in one-letter code: (6-4)DNA photolyase (551 aa).

A Photolyase/cryptochrome alpha/beta domain is found at 13-157 (AAAMVWFRKG…DVFSPVSHTL (145 aa)). Position 254 (E254) interacts with phosphate. Residues K255, 268–272 (TTVLS), 309–313 (QLLWR), 372–375 (WMHH), R378, 407–409 (DSD), and N413 contribute to the FAD site. Residue W312 coordinates DNA. The segment at 374–379 (HHLARH) is interaction with DNA. Position 419 (W419) interacts with DNA. Residues 508–551 (YASNRLDDDKPDKGKSSNSSRRKLSAGSQVTPNSSKTKQLKRSS) form a disordered region. Over residues 512-522 (RLDDDKPDKGK) the composition is skewed to basic and acidic residues. Residues 533–544 (AGSQVTPNSSKT) are compositionally biased toward polar residues.

It belongs to the DNA photolyase class-1 family. Requires FAD as cofactor.

The enzyme catalyses (6-4) photoproduct (in DNA) = 2 pyrimidine residues (in DNA).. In terms of biological role, involved in repair of UV radiation-induced DNA damage. Catalyzes the photoreactivation of pyrimidine [6-4] pyrimidone photoproduct (6-4 products). The sequence is that of (6-4)DNA photolyase (UVR3) from Oryza sativa subsp. japonica (Rice).